We begin with the raw amino-acid sequence, 382 residues long: MQMIKKMVLSETFPGILLIFFTFLALLCKNSSLSVIYTDFFHANFTVGFDHFQISKSLDLWINDGLIAIFFLCIGLELKYEILRGQLKNIRAVSLPIFGALGGMITPALIFAAINYSHDFAMKGWAIPTATDIAFAVGILMLLGNKIPTSLKLFLLSLAIFDDLGAIVIIALFYTDQLSALAIIICLFCIFALLLLNYYHITHLSLYVLVGVVLWIAMLKSGVHATLAGVIISLFIPLDTKNKKPYLHEVLKDLNPWVVYFILPLFAFANAGIDIRDMHLGSVFSPVSLGIILGLFLGKQLGVFTFCFIAIKLKLAKLPENIKYGKFYGICILTGIGFTMSLFIDGLAYKNSDIFEHADKLAILIASFLSAIVGFIYLKIVK.

Helical transmembrane passes span 7–27 (MVLS…LALL), 58–78 (LDLW…GLEL), 94–114 (SLPI…FAAI), 124–144 (GWAI…MLLG), 153–173 (LFLL…IALF), 178–198 (LSAL…LLNY), 199–219 (YHIT…IAML), 255–275 (NPWV…GIDI), 291–311 (IILG…FIAI), 327–347 (FYGI…IDGL), and 361–381 (LAIL…LKIV).

The protein belongs to the NhaA Na(+)/H(+) (TC 2.A.33) antiporter family.

It localises to the cell inner membrane. The catalysed reaction is Na(+)(in) + 2 H(+)(out) = Na(+)(out) + 2 H(+)(in). In terms of biological role, na(+)/H(+) antiporter that extrudes sodium in exchange for external protons. This is Na(+)/H(+) antiporter NhaA 2 from Campylobacter jejuni subsp. jejuni serotype O:6 (strain 81116 / NCTC 11828).